The following is a 795-amino-acid chain: Protocadherin beta-5 (795 aa).

The signal sequence occupies residues 1–30; that stretch reads METALAKTPQKRQVMFLAILLLLWEAGSEA. Topologically, residues 31–689 are extracellular; sequence VRYSIPEETE…AQADSLTVYL (659 aa). Cadherin domains are found at residues 35–133, 138–242, 247–346, 351–450, and 455–560; these read IPEE…APEF, MLLK…APEF, YEVQ…APEL, LSSP…APAF, and YTLF…SPFV. Asn-169 carries an N-linked (GlcNAc...) asparagine glycan. Residue Lys-296 is modified to N6-acetyllysine. 2 N-linked (GlcNAc...) asparagine glycosylation sites follow: Asn-417 and Asn-435. Residue Asn-566 is glycosylated (N-linked (GlcNAc...) asparagine). Positions 567–670 constitute a Cadherin 6 domain; sequence GSAPCTELVP…LVDGFSQPYL (104 aa). A helical transmembrane segment spans residues 690 to 710; that stretch reads VVALASVSSLFLFSVLLFVAV. Topologically, residues 711–795 are cytoplasmic; it reads RLCRRSRAAP…AAFRNSFGLN (85 aa).

It is found in the cell membrane. Its function is as follows. Potential calcium-dependent cell-adhesion protein. May be involved in the establishment and maintenance of specific neuronal connections in the brain. The polypeptide is Protocadherin beta-5 (PCDHB5) (Homo sapiens (Human)).